Reading from the N-terminus, the 275-residue chain is Penicillin-insensitive murein endopeptidase (275 aa).

The signal sequence occupies residues M1–A19. 3 disulfides stabilise this stretch: C44-C264, C187-C235, and C216-C223. Residues H110, H113, D120, D147, and H211 each coordinate Zn(2+). The interval D227–P262 is disordered. Positions Q244–P262 are enriched in pro residues.

Belongs to the peptidase M74 family. Dimer. It depends on Zn(2+) as a cofactor.

The protein localises to the periplasm. In terms of biological role, murein endopeptidase that cleaves the D-alanyl-meso-2,6-diamino-pimelyl amide bond that connects peptidoglycan strands. Likely plays a role in the removal of murein from the sacculus. This Yersinia pestis protein is Penicillin-insensitive murein endopeptidase.